The chain runs to 158 residues: NAD(P)H-quinone oxidoreductase subunit N (158 aa).

Belongs to the complex I NdhN subunit family. As to quaternary structure, NDH-1 can be composed of about 15 different subunits; different subcomplexes with different compositions have been identified which probably have different functions.

Its subcellular location is the cellular thylakoid membrane. The enzyme catalyses a plastoquinone + NADH + (n+1) H(+)(in) = a plastoquinol + NAD(+) + n H(+)(out). It catalyses the reaction a plastoquinone + NADPH + (n+1) H(+)(in) = a plastoquinol + NADP(+) + n H(+)(out). In terms of biological role, NDH-1 shuttles electrons from an unknown electron donor, via FMN and iron-sulfur (Fe-S) centers, to quinones in the respiratory and/or the photosynthetic chain. The immediate electron acceptor for the enzyme in this species is believed to be plastoquinone. Couples the redox reaction to proton translocation, and thus conserves the redox energy in a proton gradient. Cyanobacterial NDH-1 also plays a role in inorganic carbon-concentration. This Rippkaea orientalis (strain PCC 8801 / RF-1) (Cyanothece sp. (strain PCC 8801)) protein is NAD(P)H-quinone oxidoreductase subunit N.